A 527-amino-acid polypeptide reads, in one-letter code: FAD-dependent monooxygenase CTB5 (527 aa).

The region spanning 78 to 255 (SDLHPSCIAL…TAVTLKTFGQ (178 aa)) is the FAD-binding PCMH-type domain.

The protein belongs to the oxygen-dependent FAD-linked oxidoreductase family.

It participates in mycotoxin biosynthesis. FAD-dependent monooxygenase; part of the gene cluster that mediates the biosynthesis of cercosporin, a light-activated, non-host-selective toxin. The perylenequinone chromophore of cercosporin absorbs light energy to attain an electronically-activated triplet state and produces active oxygen species such as the hydroxyl radical, superoxide, hydrogen peroxide or singlet oxygen upon reaction with oxygen molecules. These reactive oxygen species cause damage to various cellular components including lipids, proteins and nucleic acids. The first step of cercosporin biosynthesis is performed by the polyketide synthase CTB1 which catalyzes the formation of nor-toralactone. The starter unit acyltransferase (SAT) domain of CTB1 initiates polyketide extension by the selective utilization of acetyl-CoA, which is elongated to the heptaketide in the beta-ketoacyl synthase (KS) domain by successive condensations with six malonyl units introduced by the malonyl acyltransferase (MAT) domain. The product template (PT) domain catalyzes C4-C9 and C2-C11 aldol cyclizations and dehydrations to a trihydroxynaphthalene, which is thought to be delivered to the thioesterase (TE) domain for product release. The bifunctional enzyme CTB3 then methylates nor-toralactone to toralactone before conducting an unusual oxidative aromatic ring opening. The O-methyltransferase CTB2 further methylates the nascent OH-6 of the CBT3 product, blocking further oxidation at this site before the reductase CTB6 reduces the 2-oxopropyl ketone at position C7, giving naphthalene. The FAD-dependent monooxygenase CTB5 in concert with the multicopper oxidase CTB12 are responsible for homodimerization of naphthalene with CTB7 installing the dioxepine moiety, finally producing cercosporin. The fasciclin domain-containing protein CTB11 might act with CTB5 and CTB12 whereas the roles of CTB9 and CTB10 have still to be elucidated. In Cercospora beticola (Sugarbeet leaf spot fungus), this protein is FAD-dependent monooxygenase CTB5.